The primary structure comprises 121 residues: Holin-like protein CidA (121 aa).

The next 3 helical transmembrane spans lie at 27 to 47, 58 to 78, and 89 to 109; these read VHLP…SLKF, GADF…VAVI, and IDLI…TGIL.

It belongs to the CidA/LrgA family. CidA subfamily.

The protein resides in the cell membrane. Its function is as follows. Increases the activity of extracellular murein hydrolases possibly by mediating their export via hole formation. Inhibited by the antiholin-like proteins LrgAB. In an unstressed cell, the LrgAB products probably inhibit the function of the CidA protein. When a cell is stressed by the addition of antibiotics or by other factors in the environment, CidA possibly oligomerizes within the bacterial cell membrane, creating lesions that disrupt the proton motive force, which in turn results in loss of cell viability. These lesions are also hypothesized to regulate the subsequent cell lysis by either allowing the murein hydrolases access to the cell wall substrate and/or regulating their activity by a possible change in the cell wall pH that results from loss of membrane potential. The protein is Holin-like protein CidA of Bacillus cytotoxicus (strain DSM 22905 / CIP 110041 / 391-98 / NVH 391-98).